The chain runs to 249 residues: Putative NAD(+)--arginine ADP-ribosyltransferase Vis (249 aa).

Residues 1-18 form the signal peptide; sequence MNTRFLLLLCCLSFTTFS. The 193-residue stretch at 31-223 folds into the TR mART core domain; it reads EEEVTQLAED…IGVETVKASA (193 aa). NAD(+) is bound by residues 68–80, 117–120, and glutamate 137; these read SISG…DYLR and RGTW. Arginine 117 is a catalytic residue. Catalysis depends on residues serine 142 and glutamate 191. Glutamate 191 is an NAD(+) binding site.

Belongs to the Arg-specific ADP-ribosyltransferase family.

It is found in the secreted. The catalysed reaction is L-arginyl-[protein] + NAD(+) = N(omega)-(ADP-D-ribosyl)-L-arginyl-[protein] + nicotinamide + H(+). A probable mono(ADP-ribosyl)transferase, it may ADP-ribosylate Arg in target protein(s). Upon expression in yeast cells causes cell death. The protein is Putative NAD(+)--arginine ADP-ribosyltransferase Vis of Vibrio splendidus (strain 12B01).